We begin with the raw amino-acid sequence, 228 residues long: Urease accessory protein UreF (228 aa).

This sequence belongs to the UreF family. In terms of assembly, ureD, UreF and UreG form a complex that acts as a GTP-hydrolysis-dependent molecular chaperone, activating the urease apoprotein by helping to assemble the nickel containing metallocenter of UreC. The UreE protein probably delivers the nickel.

Its subcellular location is the cytoplasm. Its function is as follows. Required for maturation of urease via the functional incorporation of the urease nickel metallocenter. This Yersinia pseudotuberculosis serotype IB (strain PB1/+) protein is Urease accessory protein UreF.